A 231-amino-acid polypeptide reads, in one-letter code: Flagellar L-ring protein (231 aa).

An N-terminal signal peptide occupies residues methionine 1–glycine 18. Cysteine 19 carries the N-palmitoyl cysteine lipid modification. The S-diacylglycerol cysteine moiety is linked to residue cysteine 19.

Belongs to the FlgH family. The basal body constitutes a major portion of the flagellar organelle and consists of four rings (L,P,S, and M) mounted on a central rod.

It localises to the cell outer membrane. It is found in the bacterial flagellum basal body. Assembles around the rod to form the L-ring and probably protects the motor/basal body from shearing forces during rotation. The protein is Flagellar L-ring protein of Pseudomonas entomophila (strain L48).